We begin with the raw amino-acid sequence, 345 residues long: Phosphoribosylformylglycinamidine cyclo-ligase (345 aa).

It belongs to the AIR synthase family.

It is found in the cytoplasm. The enzyme catalyses 2-formamido-N(1)-(5-O-phospho-beta-D-ribosyl)acetamidine + ATP = 5-amino-1-(5-phospho-beta-D-ribosyl)imidazole + ADP + phosphate + H(+). The protein operates within purine metabolism; IMP biosynthesis via de novo pathway; 5-amino-1-(5-phospho-D-ribosyl)imidazole from N(2)-formyl-N(1)-(5-phospho-D-ribosyl)glycinamide: step 2/2. This is Phosphoribosylformylglycinamidine cyclo-ligase from Histophilus somni (strain 129Pt) (Haemophilus somnus).